The chain runs to 271 residues: RELT-like protein 1 (271 aa).

A signal peptide spans 1–23; it reads MAPRALPGSAVLAAAVFVGGAVS. At 24–57 the chain is on the extracellular side; sequence SPLVAPDNGSSRTLHSRTETTPSPSNDTGNGHPE. The disordered stretch occupies residues 28–53; the sequence is APDNGSSRTLHSRTETTPSPSNDTGN. N-linked (GlcNAc...) asparagine glycans are attached at residues Asn-31 and Asn-49. The segment covering 31-52 has biased composition (polar residues); sequence NGSSRTLHSRTETTPSPSNDTG. Residues 58-78 form a helical membrane-spanning segment; it reads YIAYALVPVFFIMGLFGVLIC. Topologically, residues 79-271 are cytoplasmic; the sequence is HLLKKKGYRC…PVKRERSGTE (193 aa). The stretch at 89–113 forms a coiled coil; sequence TTEAEQDIEEEKVEKIELNDSVNEN. Residues Ser-109 and Ser-114 each carry the phosphoserine modification. 2 disordered regions span residues 145–173 and 233–271; these read DPESPVTPSTPGSPPVSPGPLSPGGTPGK and VEHKSNQKERRSLMSVSGAETVNGEVPATPVKRERSGTE. Over residues 155 to 165 the composition is skewed to pro residues; that stretch reads PGSPPVSPGPL. Positions 233-244 are enriched in basic and acidic residues; the sequence is VEHKSNQKERRS. Phosphoserine is present on residues Ser-244 and Ser-247.

The protein belongs to the RELT family. In terms of assembly, interacts with RELT, RELL2 and OXSR1. Interacts with PLSCR1. Post-translationally, phosphorylated in vitro by OXSR1. As to expression, widely expressed. Expressed at highest levels in the placenta, skeletal muscle, spleen and testis.

The protein resides in the cell membrane. In terms of biological role, induces activation of MAPK14/p38 cascade, when overexpressed. Induces apoptosis, when overexpressed. The sequence is that of RELT-like protein 1 (RELL1) from Homo sapiens (Human).